The primary structure comprises 742 residues: Tegument protein UL47 (742 aa).

Positions 1-10 (MDAARDGRPE) are enriched in basic and acidic residues. Disordered stretches follow at residues 1 to 128 (MDAA…TAHL) and 155 to 199 (EFPP…DDAA). A Nuclear localization signal motif is present at residues 10-30 (ERRPRRSGTYRTHPFQRPSAR). Residues 18–37 (TYRTHPFQRPSARRSLLDAL) show a composition bias toward low complexity. Residues 38-62 (RAADAEAAERPRVRRPRPDFQRPPD) show a composition bias toward basic and acidic residues. The span at 63–88 (EDTSEDENVYDYIDGDSSDSADDYDS) shows a compositional bias: acidic residues. Positions 95–122 (RGPNHGAGDAMDTDAPPERAPEGGAPQD) match the Nuclear export signal motif. The short motif at 485-495 (LSAYLTLFVAL) is the Nuclear export signal element.

Belongs to the alphaherpesvirinae HHV-1 UL47 family. In terms of assembly, interacts with US3 kinase. Interacts with UL31 and UL34; these interactions seem important for efficient virion nuclear egress. Interacts with UL41/VHS. In terms of processing, phosphorylated by US3. This phosphorylation is required for proper nuclear localization.

It is found in the virion tegument. The protein resides in the host nucleus. It localises to the host cytoplasm. Tegument protein that can bind to various RNA transcripts. Plays a role in the attenuation of selective viral and cellular mRNA degradation by modulating the activity of host shutoff RNase UL41/VHS. Also plays a role in the primary envelopment of virions in the perinuclear space, probably by interacting with two nuclear egress proteins UL31 and UL34. This is Tegument protein UL47 from Bos taurus (Bovine).